The following is a 78-amino-acid chain: Large ribosomal subunit protein uL29 (78 aa).

This sequence belongs to the universal ribosomal protein uL29 family.

The chain is Large ribosomal subunit protein uL29 from Salinispora arenicola (strain CNS-205).